Consider the following 350-residue polypeptide: Ookinete surface protein PIMMS43 (350 aa).

Positions 1–24 (MIKLCTFLSLFLIFFFLNLNAING) are cleaved as a signal peptide. The chain crosses the membrane as a helical span at residues 330–350 (NSIASKLMSVFVFIAVIIYIL).

As to quaternary structure, forms multimers, perhaps with an unknown protein(s).

The protein localises to the membrane. In terms of biological role, involved in ookinete evasion of the mosquito complement-like response, oocyst maturation, sporozoite development and infectivity. This is Ookinete surface protein PIMMS43 from Plasmodium berghei (strain Anka).